The following is a 323-amino-acid chain: tRNA dimethylallyltransferase (323 aa).

Residue glycine 18 to threonine 25 coordinates ATP. Threonine 20 to threonine 25 is a substrate binding site. The segment at aspartate 44–leucine 47 is interaction with substrate tRNA.

The protein belongs to the IPP transferase family. As to quaternary structure, monomer. Mg(2+) serves as cofactor.

The catalysed reaction is adenosine(37) in tRNA + dimethylallyl diphosphate = N(6)-dimethylallyladenosine(37) in tRNA + diphosphate. Functionally, catalyzes the transfer of a dimethylallyl group onto the adenine at position 37 in tRNAs that read codons beginning with uridine, leading to the formation of N6-(dimethylallyl)adenosine (i(6)A). This Blochmanniella floridana protein is tRNA dimethylallyltransferase.